The primary structure comprises 163 residues: 3-isopropylmalate dehydratase small subunit (163 aa).

Belongs to the LeuD family. LeuD type 2 subfamily. In terms of assembly, heterodimer of LeuC and LeuD.

The catalysed reaction is (2R,3S)-3-isopropylmalate = (2S)-2-isopropylmalate. Its pathway is amino-acid biosynthesis; L-leucine biosynthesis; L-leucine from 3-methyl-2-oxobutanoate: step 2/4. In terms of biological role, catalyzes the isomerization between 2-isopropylmalate and 3-isopropylmalate, via the formation of 2-isopropylmaleate. The protein is 3-isopropylmalate dehydratase small subunit of Clostridioides difficile (strain 630) (Peptoclostridium difficile).